A 270-amino-acid polypeptide reads, in one-letter code: Putative pyruvate, phosphate dikinase regulatory protein (270 aa).

Residue 151 to 158 coordinates ADP; it reads GVSRTSKT.

The protein belongs to the pyruvate, phosphate/water dikinase regulatory protein family. PDRP subfamily.

The enzyme catalyses N(tele)-phospho-L-histidyl/L-threonyl-[pyruvate, phosphate dikinase] + ADP = N(tele)-phospho-L-histidyl/O-phospho-L-threonyl-[pyruvate, phosphate dikinase] + AMP + H(+). It catalyses the reaction N(tele)-phospho-L-histidyl/O-phospho-L-threonyl-[pyruvate, phosphate dikinase] + phosphate + H(+) = N(tele)-phospho-L-histidyl/L-threonyl-[pyruvate, phosphate dikinase] + diphosphate. Functionally, bifunctional serine/threonine kinase and phosphorylase involved in the regulation of the pyruvate, phosphate dikinase (PPDK) by catalyzing its phosphorylation/dephosphorylation. This is Putative pyruvate, phosphate dikinase regulatory protein from Bacillus velezensis (strain DSM 23117 / BGSC 10A6 / LMG 26770 / FZB42) (Bacillus amyloliquefaciens subsp. plantarum).